Consider the following 160-residue polypeptide: Large ribosomal subunit protein uL22c (160 aa).

It belongs to the universal ribosomal protein uL22 family. Part of the 50S ribosomal subunit.

Its subcellular location is the plastid. It is found in the chloroplast. Functionally, this protein binds specifically to 23S rRNA. The globular domain of the protein is located near the polypeptide exit tunnel on the outside of the subunit, while an extended beta-hairpin is found that lines the wall of the exit tunnel in the center of the 70S ribosome. This is Large ribosomal subunit protein uL22c (rpl22) from Capsella bursa-pastoris (Shepherd's purse).